Here is a 280-residue protein sequence, read N- to C-terminus: MMTKLVINPVAFQLGSLSVKWYGIIMAVAIVLATWMAISEGKKRQIISDDFVDLLLWAVPLGYVGARIYYVIFEWGYYSKHPNQIIAIWNGGIAIYGGLIAGLIVLLIFCHKRDLPPFLMLDIITPGVMAAQILGRWGNFVNQEAHGGPTTLHFLQSLHLPEFVIQQMKIGGTYYQPTFLYESFFNLIGLIIILSLRHRKHVFKQGEVFMSYLLWYSVVRFFVEGMRTDSLYIFGIIRVSQALSLVLFIATIILWIYRRKVVKPKWYLQGSGLKYPYTRD.

The next 3 helical transmembrane spans lie at 21–41, 54–74, and 88–108; these read WYGI…ISEG, LLLW…VIFE, and IWNG…VLLI. A 1,2-diacyl-sn-glycero-3-phospho-(1'-sn-glycerol) is bound at residue arginine 136. 3 helical membrane passes run 176 to 196, 206 to 226, and 236 to 256; these read QPTF…ILSL, GEVF…VEGM, and IIRV…ILWI.

Belongs to the Lgt family.

The protein localises to the cell membrane. It carries out the reaction L-cysteinyl-[prolipoprotein] + a 1,2-diacyl-sn-glycero-3-phospho-(1'-sn-glycerol) = an S-1,2-diacyl-sn-glyceryl-L-cysteinyl-[prolipoprotein] + sn-glycerol 1-phosphate + H(+). It participates in protein modification; lipoprotein biosynthesis (diacylglyceryl transfer). In terms of biological role, catalyzes the transfer of the diacylglyceryl group from phosphatidylglycerol to the sulfhydryl group of the N-terminal cysteine of a prolipoprotein, the first step in the formation of mature lipoproteins. This is Phosphatidylglycerol--prolipoprotein diacylglyceryl transferase from Lactobacillus acidophilus (strain ATCC 700396 / NCK56 / N2 / NCFM).